The primary structure comprises 90 residues: DNA-binding protein HU-alpha (90 aa).

Belongs to the bacterial histone-like protein family. As to quaternary structure, heterodimer of an alpha and a beta chain.

In terms of biological role, histone-like DNA-binding protein which is capable of wrapping DNA to stabilize it, and thus to prevent its denaturation under extreme environmental conditions. This is DNA-binding protein HU-alpha (hupA) from Vibrio proteolyticus (Aeromonas proteolytica).